Here is a 100-residue protein sequence, read N- to C-terminus: Large ribosomal subunit protein uL23 (100 aa).

This sequence belongs to the universal ribosomal protein uL23 family. In terms of assembly, part of the 50S ribosomal subunit. Contacts protein L29, and trigger factor when it is bound to the ribosome.

Functionally, one of the early assembly proteins it binds 23S rRNA. One of the proteins that surrounds the polypeptide exit tunnel on the outside of the ribosome. Forms the main docking site for trigger factor binding to the ribosome. The chain is Large ribosomal subunit protein uL23 from Shewanella pealeana (strain ATCC 700345 / ANG-SQ1).